We begin with the raw amino-acid sequence, 490 residues long: Glutamate--tRNA ligase (490 aa).

Positions 13–23 (PSPTGTPHVGL) match the 'HIGH' region motif. The 'KMSKS' region motif lies at 257–261 (KLSKR). Lys-260 is an ATP binding site.

Belongs to the class-I aminoacyl-tRNA synthetase family. Glutamate--tRNA ligase type 1 subfamily. As to quaternary structure, monomer.

The protein localises to the cytoplasm. It catalyses the reaction tRNA(Glu) + L-glutamate + ATP = L-glutamyl-tRNA(Glu) + AMP + diphosphate. Catalyzes the attachment of glutamate to tRNA(Glu) in a two-step reaction: glutamate is first activated by ATP to form Glu-AMP and then transferred to the acceptor end of tRNA(Glu). The chain is Glutamate--tRNA ligase from Mycobacterium tuberculosis (strain ATCC 25177 / H37Ra).